We begin with the raw amino-acid sequence, 218 residues long: Imidazole glycerol phosphate synthase subunit HisH (218 aa).

In terms of domain architecture, Glutamine amidotransferase type-1 spans 1-213 (MTTIIDYGIG…AALPTTEEAG (213 aa)). C79 serves as the catalytic Nucleophile. Catalysis depends on residues H188 and E190.

In terms of assembly, heterodimer of HisH and HisF.

It is found in the cytoplasm. The catalysed reaction is 5-[(5-phospho-1-deoxy-D-ribulos-1-ylimino)methylamino]-1-(5-phospho-beta-D-ribosyl)imidazole-4-carboxamide + L-glutamine = D-erythro-1-(imidazol-4-yl)glycerol 3-phosphate + 5-amino-1-(5-phospho-beta-D-ribosyl)imidazole-4-carboxamide + L-glutamate + H(+). It catalyses the reaction L-glutamine + H2O = L-glutamate + NH4(+). It functions in the pathway amino-acid biosynthesis; L-histidine biosynthesis; L-histidine from 5-phospho-alpha-D-ribose 1-diphosphate: step 5/9. IGPS catalyzes the conversion of PRFAR and glutamine to IGP, AICAR and glutamate. The HisH subunit catalyzes the hydrolysis of glutamine to glutamate and ammonia as part of the synthesis of IGP and AICAR. The resulting ammonia molecule is channeled to the active site of HisF. The sequence is that of Imidazole glycerol phosphate synthase subunit HisH from Salinibacter ruber (strain DSM 13855 / M31).